The following is a 274-amino-acid chain: Dermonecrotic toxin SdSicTox-betaIIB1bii (274 aa).

Residue H5 is part of the active site. The Mg(2+) site is built by E25 and D27. H41 serves as the catalytic Nucleophile. Cystine bridges form between C45-C51 and C47-C190. D85 lines the Mg(2+) pocket.

This sequence belongs to the arthropod phospholipase D family. Class II subfamily. Requires Mg(2+) as cofactor. Expressed by the venom gland.

The protein resides in the secreted. It catalyses the reaction an N-(acyl)-sphingosylphosphocholine = an N-(acyl)-sphingosyl-1,3-cyclic phosphate + choline. It carries out the reaction an N-(acyl)-sphingosylphosphoethanolamine = an N-(acyl)-sphingosyl-1,3-cyclic phosphate + ethanolamine. The catalysed reaction is a 1-acyl-sn-glycero-3-phosphocholine = a 1-acyl-sn-glycero-2,3-cyclic phosphate + choline. The enzyme catalyses a 1-acyl-sn-glycero-3-phosphoethanolamine = a 1-acyl-sn-glycero-2,3-cyclic phosphate + ethanolamine. Its function is as follows. Dermonecrotic toxins cleave the phosphodiester linkage between the phosphate and headgroup of certain phospholipids (sphingolipid and lysolipid substrates), forming an alcohol (often choline) and a cyclic phosphate. This toxin acts on sphingomyelin (SM). It may also act on ceramide phosphoethanolamine (CPE), lysophosphatidylcholine (LPC) and lysophosphatidylethanolamine (LPE), but not on lysophosphatidylserine (LPS), and lysophosphatidylglycerol (LPG). It acts by transphosphatidylation, releasing exclusively cyclic phosphate products as second products. Induces dermonecrosis, hemolysis, increased vascular permeability, edema, inflammatory response, and platelet aggregation. This chain is Dermonecrotic toxin SdSicTox-betaIIB1bii, found in Sicarius cf. damarensis (strain GJB-2008) (Six-eyed sand spider).